The chain runs to 510 residues: ATP synthase subunit alpha (510 aa).

Position 169 to 176 (169 to 176) interacts with ATP; that stretch reads GDRQTGKT.

It belongs to the ATPase alpha/beta chains family. In terms of assembly, F-type ATPases have 2 components, CF(1) - the catalytic core - and CF(0) - the membrane proton channel. CF(1) has five subunits: alpha(3), beta(3), gamma(1), delta(1), epsilon(1). CF(0) has three main subunits: a(1), b(2) and c(9-12). The alpha and beta chains form an alternating ring which encloses part of the gamma chain. CF(1) is attached to CF(0) by a central stalk formed by the gamma and epsilon chains, while a peripheral stalk is formed by the delta and b chains.

The protein localises to the cell inner membrane. The enzyme catalyses ATP + H2O + 4 H(+)(in) = ADP + phosphate + 5 H(+)(out). Functionally, produces ATP from ADP in the presence of a proton gradient across the membrane. The alpha chain is a regulatory subunit. The chain is ATP synthase subunit alpha from Azorhizobium caulinodans (strain ATCC 43989 / DSM 5975 / JCM 20966 / LMG 6465 / NBRC 14845 / NCIMB 13405 / ORS 571).